The sequence spans 21 residues: Peptide PGLa-BM2 (21 aa).

Residue A21 is modified to Alanine amide.

Expressed by the skin glands.

Its subcellular location is the secreted. In terms of biological role, antimicrobial peptide. The chain is Peptide PGLa-BM2 from Xenopus boumbaensis (Mawa clawed frog).